The sequence spans 286 residues: Citrullinase (286 aa).

One can recognise a CN hydrolase domain in the interval 4–258 (IKVAVVQLSF…DDILYATFDF (255 aa)). Glu43 acts as the Proton acceptor in catalysis. Lys116 is an active-site residue. Cys153 acts as the Nucleophile in catalysis.

It belongs to the carbon-nitrogen hydrolase superfamily.

The catalysed reaction is L-citrulline + H2O + 2 H(+) = L-ornithine + NH4(+) + CO2. In terms of biological role, catalyzes the degradation of citrulline into ornithine, carbon dioxide and ammonia. Contributes to intramacrophage survival, in vivo growth and pathogenesis. This Francisella tularensis subsp. tularensis (strain SCHU S4 / Schu 4) protein is Citrullinase.